Here is a 168-residue protein sequence, read N- to C-terminus: DOMON domain-containing protein Y73F4A.2 (168 aa).

Positions M1 to A18 are cleaved as a signal peptide. One can recognise a DOMON domain in the interval S26–G143. N-linked (GlcNAc...) asparagine glycosylation occurs at N36. A disordered region spans residues G148–N168. The segment covering R152 to N168 has biased composition (basic and acidic residues).

The protein resides in the secreted. The polypeptide is DOMON domain-containing protein Y73F4A.2 (Caenorhabditis elegans).